The sequence spans 320 residues: Quinolinate synthase (320 aa).

Iminosuccinate contacts are provided by H34 and S51. C96 is a [4Fe-4S] cluster binding site. Iminosuccinate contacts are provided by residues 122–124 (YIN) and S139. C182 provides a ligand contact to [4Fe-4S] cluster. Iminosuccinate-binding positions include 208–210 (HPE) and T225. C276 contacts [4Fe-4S] cluster.

It belongs to the quinolinate synthase family. Type 2 subfamily. It depends on [4Fe-4S] cluster as a cofactor.

It localises to the cytoplasm. It catalyses the reaction iminosuccinate + dihydroxyacetone phosphate = quinolinate + phosphate + 2 H2O + H(+). It participates in cofactor biosynthesis; NAD(+) biosynthesis; quinolinate from iminoaspartate: step 1/1. Catalyzes the condensation of iminoaspartate with dihydroxyacetone phosphate to form quinolinate. In Synechococcus sp. (strain ATCC 27144 / PCC 6301 / SAUG 1402/1) (Anacystis nidulans), this protein is Quinolinate synthase.